Reading from the N-terminus, the 344-residue chain is Phosphate acyltransferase (344 aa).

Belongs to the PlsX family. As to quaternary structure, homodimer. Probably interacts with PlsY.

Its subcellular location is the cytoplasm. The catalysed reaction is a fatty acyl-[ACP] + phosphate = an acyl phosphate + holo-[ACP]. Its pathway is lipid metabolism; phospholipid metabolism. Catalyzes the reversible formation of acyl-phosphate (acyl-PO(4)) from acyl-[acyl-carrier-protein] (acyl-ACP). This enzyme utilizes acyl-ACP as fatty acyl donor, but not acyl-CoA. This Acaryochloris marina (strain MBIC 11017) protein is Phosphate acyltransferase.